The chain runs to 100 residues: NADH-quinone oxidoreductase subunit K (100 aa).

The next 3 helical transmembrane spans lie at 2-22, 29-49, and 60-80; these read IGLT…LVGI, IMLF…LAAI, and IIAF…LGLL.

The protein belongs to the complex I subunit 4L family. In terms of assembly, NDH-1 is composed of 14 different subunits. Subunits NuoA, H, J, K, L, M, N constitute the membrane sector of the complex.

It localises to the cell inner membrane. It catalyses the reaction a quinone + NADH + 5 H(+)(in) = a quinol + NAD(+) + 4 H(+)(out). Its function is as follows. NDH-1 shuttles electrons from NADH, via FMN and iron-sulfur (Fe-S) centers, to quinones in the respiratory chain. The immediate electron acceptor for the enzyme in this species is believed to be ubiquinone. Couples the redox reaction to proton translocation (for every two electrons transferred, four hydrogen ions are translocated across the cytoplasmic membrane), and thus conserves the redox energy in a proton gradient. The sequence is that of NADH-quinone oxidoreductase subunit K from Campylobacter concisus (strain 13826).